The primary structure comprises 577 residues: Outer spore wall assembly protein SHE10 (577 aa).

A signal peptide spans 1–23; sequence MGKLIKLITTLTVLVSLLQYCCE. Coiled coils occupy residues 379–416 and 513–561; these read NETR…ENVE and ILRS…EEDV. A compositionally biased stretch (basic and acidic residues) spans 525–545; the sequence is RERKERERKEREKAAAEEFQR. Positions 525–577 are disordered; that stretch reads RERKERERKEREKAAAEEFQRQQELLRQQEEEDEEDVSYTSTSTITTTTTMTL. The span at 562-577 shows a compositional bias: low complexity; that stretch reads SYTSTSTITTTTTMTL.

This sequence belongs to the SHE10 family. In terms of assembly, component of the mitochondria-localized RNase mitochondrial RNA-processing (RNase MRP) composed of one single RNA encoded by the NME1 gene and at least 31 proteins. Absent in the nucleus-localized RNase MRP (NuMRP).

The protein localises to the mitochondrion. In terms of biological role, involved in spore wall assembly. May be a component of the mitochondrial RNase MRP (MtMRP), a ribonucleoprotein endoribonuclease involved in the cleaving RNA transcripts to generate primers for DNA replication in mitochondria. The sequence is that of Outer spore wall assembly protein SHE10 from Saccharomyces cerevisiae (strain YJM789) (Baker's yeast).